The sequence spans 550 residues: MAELTISTEEIRGALERYVSSYTADVSREEVGTVADAGDGIAHVEGLPSTMTNELLEFEDGTLGVALNLDVREIGVVVLGDFGGIEEGQRVKRTGRVLSAPVGDAFLGRVVNALGHPIDGLGDIANEGFRELELQAPNVMARKSVDEPLQTGIKAVDAMTPIGRGQRQLIIGDRKTGKTTVALDTILNQRDNWRSGDPKKQVRCIYVAVGQKASTIASIKGVLEEAGAMEYTTIVASPASDPAGFKYLAPYTGSTIGQHWMYGGKHVLVVFDDLSKQAEAYRAVSLLLRRPPGREAYPGDVFYLHSRLLERCAKLSDEMGGGSMTGLPIIETKANDISAFIPTNVISITDGQIFLETDLFNQGVRPAINVGTSVSRVGGAAQVKPMKKVAGSLRLNLAQYRELEAFAAFASDLDKASRAQLERGSRLVELLKQPNYSPFPVEEQVVSVWAGTEGRLDDIPVGEIRRFESEFLQYLRHKHEGVLAGIAAGTWGDEIIASLDAAISDFKNLFLGKEDEQRVNEPPAKPLAGEENRETVTRFRDGTTDRPAES.

ATP is bound at residue 172–179; sequence GDRKTGKT. Residues 514-550 form a disordered region; the sequence is EDEQRVNEPPAKPLAGEENRETVTRFRDGTTDRPAES. The segment covering 528-550 has biased composition (basic and acidic residues); sequence AGEENRETVTRFRDGTTDRPAES.

Belongs to the ATPase alpha/beta chains family. In terms of assembly, F-type ATPases have 2 components, CF(1) - the catalytic core - and CF(0) - the membrane proton channel. CF(1) has five subunits: alpha(3), beta(3), gamma(1), delta(1), epsilon(1). CF(0) has three main subunits: a(1), b(2) and c(9-12). The alpha and beta chains form an alternating ring which encloses part of the gamma chain. CF(1) is attached to CF(0) by a central stalk formed by the gamma and epsilon chains, while a peripheral stalk is formed by the delta and b chains.

It is found in the cell membrane. The catalysed reaction is ATP + H2O + 4 H(+)(in) = ADP + phosphate + 5 H(+)(out). Its function is as follows. Produces ATP from ADP in the presence of a proton gradient across the membrane. The alpha chain is a regulatory subunit. The protein is ATP synthase subunit alpha of Salinispora arenicola (strain CNS-205).